Reading from the N-terminus, the 279-residue chain is HTH-type transcriptional regulator HdfR (279 aa).

The region spanning 1-58 (MDTELLKTFLEVSRTRHFGRAAESLYLTQSAVSFRIRQLENQLGVNLFTRHRNNIRLT) is the HTH lysR-type domain. The segment at residues 18–37 (FGRAAESLYLTQSAVSFRIR) is a DNA-binding region (H-T-H motif).

It belongs to the LysR transcriptional regulatory family.

Its function is as follows. Negatively regulates the transcription of the flagellar master operon flhDC by binding to the upstream region of the operon. The chain is HTH-type transcriptional regulator HdfR from Escherichia coli O7:K1 (strain IAI39 / ExPEC).